The following is a 622-amino-acid chain: Membrane protein insertase YidC (622 aa).

A helical transmembrane segment spans residues 6 to 26; it reads FIAVVLSVLVLVGASFLQELL. The disordered stretch occupies residues 37 to 71; it reads AEHTLSAVPEETRTQSAHGGAADTQETTQPAAHPS. Transmembrane regions (helical) follow at residues 413-433, 483-503, 513-533, and 579-599; these read LIPN…VLFF, LSGC…YRLF, MFIP…TLPF, and VMPL…LVYW.

It belongs to the OXA1/ALB3/YidC family. Type 1 subfamily. Interacts with the Sec translocase complex via SecD. Specifically interacts with transmembrane segments of nascent integral membrane proteins during membrane integration.

Its subcellular location is the cell inner membrane. Its function is as follows. Required for the insertion and/or proper folding and/or complex formation of integral membrane proteins into the membrane. Involved in integration of membrane proteins that insert both dependently and independently of the Sec translocase complex, as well as at least some lipoproteins. Aids folding of multispanning membrane proteins. In Treponema pallidum (strain Nichols), this protein is Membrane protein insertase YidC.